The primary structure comprises 860 residues: Leucine--tRNA ligase (860 aa).

The 'HIGH' region motif lies at 42–52 (PYPSGRLHMGH). The 'KMSKS' region motif lies at 619 to 623 (KMSKS). Position 622 (Lys622) interacts with ATP.

It belongs to the class-I aminoacyl-tRNA synthetase family.

The protein localises to the cytoplasm. The catalysed reaction is tRNA(Leu) + L-leucine + ATP = L-leucyl-tRNA(Leu) + AMP + diphosphate. The polypeptide is Leucine--tRNA ligase (Yersinia pseudotuberculosis serotype I (strain IP32953)).